Reading from the N-terminus, the 615-residue chain is DNA mismatch repair protein MutL (615 aa).

The interval 363 to 397 is disordered; the sequence is FAEPAVREPVAPRYTPAPASGSRPAAPWPNAQPGY. Over residues 378 to 391 the composition is skewed to low complexity; sequence PAPASGSRPAAPWP.

This sequence belongs to the DNA mismatch repair MutL/HexB family.

In terms of biological role, this protein is involved in the repair of mismatches in DNA. It is required for dam-dependent methyl-directed DNA mismatch repair. May act as a 'molecular matchmaker', a protein that promotes the formation of a stable complex between two or more DNA-binding proteins in an ATP-dependent manner without itself being part of a final effector complex. The protein is DNA mismatch repair protein MutL of Escherichia coli O157:H7.